Reading from the N-terminus, the 265-residue chain is uncharacterized protein (265 aa).

2 disordered regions span residues 62–94 (RNKK…ALGK) and 118–149 (MVPG…RPNP). Residues 126 to 139 (DGPKKSDTDIKDAV) are compositionally biased toward basic and acidic residues.

This is an uncharacterized protein from Homo sapiens (Human).